Consider the following 207-residue polypeptide: Venom allergen 5 (207 aa).

Intrachain disulfides connect cysteine 4/cysteine 16, cysteine 8/cysteine 105, cysteine 29/cysteine 97, and cysteine 173/cysteine 190. In terms of domain architecture, SCP spans 48 to 192; it reads VDEHNRFRQK…MKSHYLVCNY (145 aa).

This sequence belongs to the CRISP family. Venom allergen 5-like subfamily. As to quaternary structure, monomer. As to expression, expressed by the venom gland.

It localises to the secreted. This chain is Venom allergen 5, found in Polybia scutellaris rioplatensis (Camoati).